Reading from the N-terminus, the 302-residue chain is Glutaminase (302 aa).

Positions 61, 111, 155, 162, 186, 238, and 256 each coordinate substrate.

It belongs to the glutaminase family. In terms of assembly, homotetramer.

The enzyme catalyses L-glutamine + H2O = L-glutamate + NH4(+). The chain is Glutaminase from Pseudomonas savastanoi pv. phaseolicola (strain 1448A / Race 6) (Pseudomonas syringae pv. phaseolicola (strain 1448A / Race 6)).